The chain runs to 163 residues: K88 minor fimbrial subunit FaeF (163 aa).

The N-terminal stretch at 1 to 22 (MKKTMMAAALVLSALSIQSALA) is a signal peptide.

The protein localises to the fimbrium. K88 minor fimbrial subunit, plays an essential role in the biogenesis of the K88 fimbriae. required at some step in the initiation and/or elongation of the K88 fimbriae. In Escherichia coli, this protein is K88 minor fimbrial subunit FaeF (faeF).